A 254-amino-acid chain; its full sequence is Hydroxyacylglutathione hydrolase (254 aa).

7 residues coordinate Zn(2+): H52, H54, D56, H57, H109, D126, and H164.

Belongs to the metallo-beta-lactamase superfamily. Glyoxalase II family. Monomer. Zn(2+) serves as cofactor.

The enzyme catalyses an S-(2-hydroxyacyl)glutathione + H2O = a 2-hydroxy carboxylate + glutathione + H(+). It participates in secondary metabolite metabolism; methylglyoxal degradation; (R)-lactate from methylglyoxal: step 2/2. Its function is as follows. Thiolesterase that catalyzes the hydrolysis of S-D-lactoyl-glutathione to form glutathione and D-lactic acid. The polypeptide is Hydroxyacylglutathione hydrolase (Stenotrophomonas maltophilia (strain R551-3)).